The following is a 119-amino-acid chain: Flagellar transcriptional regulator FlhD (119 aa).

Belongs to the FlhD family. Homodimer; disulfide-linked. Forms a heterohexamer composed of two FlhC and four FlhD subunits. Each FlhC binds a FlhD dimer, forming a heterotrimer, and a hexamer assembles by dimerization of two heterotrimers.

The protein localises to the cytoplasm. Functions in complex with FlhC as a master transcriptional regulator that regulates transcription of several flagellar and non-flagellar operons by binding to their promoter region. Activates expression of class 2 flagellar genes, including fliA, which is a flagellum-specific sigma factor that turns on the class 3 genes. Also regulates genes whose products function in a variety of physiological pathways. The protein is Flagellar transcriptional regulator FlhD of Cronobacter sakazakii (strain ATCC BAA-894) (Enterobacter sakazakii).